A 95-amino-acid chain; its full sequence is Integration host factor subunit beta (95 aa).

This sequence belongs to the bacterial histone-like protein family. Heterodimer of an alpha and a beta chain.

In terms of biological role, this protein is one of the two subunits of integration host factor, a specific DNA-binding protein that functions in genetic recombination as well as in transcriptional and translational control. This is Integration host factor subunit beta from Colwellia psychrerythraea (strain 34H / ATCC BAA-681) (Vibrio psychroerythus).